Consider the following 396-residue polypeptide: NADH-quinone oxidoreductase subunit D (396 aa).

This sequence belongs to the complex I 49 kDa subunit family. In terms of assembly, NDH-1 is composed of 14 different subunits. Subunits NuoB, C, D, E, F, and G constitute the peripheral sector of the complex.

It is found in the cell inner membrane. The catalysed reaction is a quinone + NADH + 5 H(+)(in) = a quinol + NAD(+) + 4 H(+)(out). Its function is as follows. NDH-1 shuttles electrons from NADH, via FMN and iron-sulfur (Fe-S) centers, to quinones in the respiratory chain. The immediate electron acceptor for the enzyme in this species is believed to be ubiquinone. Couples the redox reaction to proton translocation (for every two electrons transferred, four hydrogen ions are translocated across the cytoplasmic membrane), and thus conserves the redox energy in a proton gradient. The polypeptide is NADH-quinone oxidoreductase subunit D (Bartonella quintana (strain Toulouse) (Rochalimaea quintana)).